A 109-amino-acid chain; its full sequence is MFGKGGMGNLMKQAQQMQDKMAKVQEEIARMEVTGEAGAGLVKVTMTGSHSVRKVDIDASLLEDDKEMLEDLIAAACNDAARRVEENQKDKMAEVTGGMQLPPGMKMPF.

Residues 88 to 109 (QKDKMAEVTGGMQLPPGMKMPF) form a disordered region.

The protein belongs to the YbaB/EbfC family. As to quaternary structure, homodimer.

The protein localises to the cytoplasm. It localises to the nucleoid. In terms of biological role, binds to DNA and alters its conformation. May be involved in regulation of gene expression, nucleoid organization and DNA protection. The polypeptide is Nucleoid-associated protein swp_1717 (Shewanella piezotolerans (strain WP3 / JCM 13877)).